The following is a 345-amino-acid chain: S-adenosylmethionine:tRNA ribosyltransferase-isomerase (345 aa).

It belongs to the QueA family. In terms of assembly, monomer.

The protein resides in the cytoplasm. The enzyme catalyses 7-aminomethyl-7-carbaguanosine(34) in tRNA + S-adenosyl-L-methionine = epoxyqueuosine(34) in tRNA + adenine + L-methionine + 2 H(+). It participates in tRNA modification; tRNA-queuosine biosynthesis. Functionally, transfers and isomerizes the ribose moiety from AdoMet to the 7-aminomethyl group of 7-deazaguanine (preQ1-tRNA) to give epoxyqueuosine (oQ-tRNA). This Rhodospirillum rubrum (strain ATCC 11170 / ATH 1.1.1 / DSM 467 / LMG 4362 / NCIMB 8255 / S1) protein is S-adenosylmethionine:tRNA ribosyltransferase-isomerase.